Here is a 256-residue protein sequence, read N- to C-terminus: Small ribosomal subunit protein eS1 (256 aa).

The segment covering 1–18 has biased composition (basic residues); the sequence is MAVGKNKRLSKGKKGIKK. The segment at 1-20 is disordered; it reads MAVGKNKRLSKGKKGIKKRT. The residue at position 2 (alanine 2) is an N-acetylalanine; partial.

Belongs to the eukaryotic ribosomal protein eS1 family. As to quaternary structure, component of the small ribosomal subunit. Mature ribosomes consist of a small (40S) and a large (60S) subunit. The 40S subunit contains about 33 different proteins and 1 molecule of RNA (18S). The 60S subunit contains about 49 different proteins and 3 molecules of RNA (25S, 5.8S and 5S).

The protein localises to the cytoplasm. In Aspergillus terreus (strain NIH 2624 / FGSC A1156), this protein is Small ribosomal subunit protein eS1 (rps1).